A 445-amino-acid polypeptide reads, in one-letter code: Exodeoxyribonuclease 7 large subunit (445 aa).

This sequence belongs to the XseA family. In terms of assembly, heterooligomer composed of large and small subunits.

It localises to the cytoplasm. The enzyme catalyses Exonucleolytic cleavage in either 5'- to 3'- or 3'- to 5'-direction to yield nucleoside 5'-phosphates.. In terms of biological role, bidirectionally degrades single-stranded DNA into large acid-insoluble oligonucleotides, which are then degraded further into small acid-soluble oligonucleotides. This Limosilactobacillus reuteri (strain DSM 20016) (Lactobacillus reuteri) protein is Exodeoxyribonuclease 7 large subunit.